We begin with the raw amino-acid sequence, 45 residues long: Putative purine permease 9 (45 aa).

In terms of tissue distribution, not detected in seedlings, leaves, embryos or root and shoot meristems.

The protein is Putative purine permease 9 of Arabidopsis thaliana (Mouse-ear cress).